The primary structure comprises 173 residues: UPF0398 protein SMU_470 (173 aa).

The protein belongs to the UPF0398 family.

This is UPF0398 protein SMU_470 from Streptococcus mutans serotype c (strain ATCC 700610 / UA159).